The sequence spans 910 residues: Protein translocase subunit SecA (910 aa).

Residues Q89, 107 to 111, and D502 each bind ATP; that span reads GEGKT. Positions 889, 891, 900, and 901 each coordinate Zn(2+).

This sequence belongs to the SecA family. In terms of assembly, monomer and homodimer. Part of the essential Sec protein translocation apparatus which comprises SecA, SecYEG and auxiliary proteins SecDF-YajC and YidC. Zn(2+) is required as a cofactor.

It is found in the cell inner membrane. Its subcellular location is the cytoplasm. The catalysed reaction is ATP + H2O + cellular proteinSide 1 = ADP + phosphate + cellular proteinSide 2.. Part of the Sec protein translocase complex. Interacts with the SecYEG preprotein conducting channel. Has a central role in coupling the hydrolysis of ATP to the transfer of proteins into and across the cell membrane, serving both as a receptor for the preprotein-SecB complex and as an ATP-driven molecular motor driving the stepwise translocation of polypeptide chains across the membrane. This is Protein translocase subunit SecA from Bartonella bacilliformis (strain ATCC 35685 / KC583 / Herrer 020/F12,63).